A 415-amino-acid polypeptide reads, in one-letter code: Esterase FrsA (415 aa).

Belongs to the FrsA family.

The catalysed reaction is a carboxylic ester + H2O = an alcohol + a carboxylate + H(+). Functionally, catalyzes the hydrolysis of esters. The polypeptide is Esterase FrsA (Yersinia pseudotuberculosis serotype O:1b (strain IP 31758)).